A 448-amino-acid chain; its full sequence is Trigger factor (448 aa).

In terms of domain architecture, PPIase FKBP-type spans 167-253 (GSIVRVDFVE…LKDIKRRDIP (87 aa)).

This sequence belongs to the FKBP-type PPIase family. Tig subfamily.

Its subcellular location is the cytoplasm. The catalysed reaction is [protein]-peptidylproline (omega=180) = [protein]-peptidylproline (omega=0). In terms of biological role, involved in protein export. Acts as a chaperone by maintaining the newly synthesized protein in an open conformation. Functions as a peptidyl-prolyl cis-trans isomerase. The sequence is that of Trigger factor from Borrelia turicatae (strain 91E135).